Reading from the N-terminus, the 274-residue chain is Cytochrome b-c1 complex subunit Rieske, mitochondrial (274 aa).

Residues 79-103 (SHTDIKVPDFSDYRRAEVLDSTKSS) lie on the Mitochondrial matrix side of the membrane. Residues 104 to 140 (KESSEARKGFSYLVTATTTVGVAYAAKNAVSQFVSSM) traverse the membrane as a helical segment. Residues 141 to 274 (SASADVLAMS…FTSGDVVVVG (134 aa)) are Mitochondrial intermembrane-facing. The Rieske domain occupies 187–272 (EAAVEVSQLR…YEFTSGDVVV (86 aa)). Residues Cys-217, His-219, Cys-236, His-239, and Ser-241 each coordinate [2Fe-2S] cluster. Cys-222 and Cys-238 are oxidised to a cystine.

It belongs to the Rieske iron-sulfur protein family. As to quaternary structure, component of the ubiquinol-cytochrome c oxidoreductase (cytochrome b-c1 complex, complex III, CIII), a multisubunit enzyme composed of 11 subunits. The complex is composed of 3 respiratory subunits cytochrome b, cytochrome c1 and Rieske protein UQCRFS1, 2 core protein subunits UQCRC1/QCR1 and UQCRC2/QCR2, and 6 low-molecular weight protein subunits UQCRH/QCR6, UQCRB/QCR7, UQCRQ/QCR8, UQCR10/QCR9, UQCR11/QCR10 and subunit 9, the cleavage product of Rieske protein UQCRFS1. The complex exists as an obligatory dimer and forms supercomplexes (SCs) in the inner mitochondrial membrane with NADH-ubiquinone oxidoreductase (complex I, CI) and cytochrome c oxidase (complex IV, CIV), resulting in different assemblies (supercomplex SCI(1)III(2)IV(1) and megacomplex MCI(2)III(2)IV(2)). Incorporation of the Rieske protein UQCRFS1 is the penultimate step in complex III assembly. Interacts with TTC19, which is involved in the clearance of UQCRFS1 fragments. Component of the ubiquinol-cytochrome c oxidoreductase (cytochrome b-c1 complex, complex III, CIII). Subunit 9 corresponds to the mitochondrial targeting sequence (MTS) of Rieske protein UQCRFS1. It is retained after processing and incorporated inside complex III, where it remains bound to the complex and localizes between the 2 core subunits UQCRC1/QCR1 and UQCRC2/QCR2. [2Fe-2S] cluster is required as a cofactor. Proteolytic processing is necessary for the correct insertion of UQCRFS1 in the complex III dimer. Several fragments are generated during UQCRFS1 insertion, most probably due to the endogenous matrix-processing peptidase (MPP) activity of the 2 core protein subunits UQCRC1/QCR1 and UQCRC2/QCR2, which are homologous to the 2 mitochondrial-processing peptidase (MPP) subunits beta-MPP and alpha-MPP respectively. The action of the protease is also necessary for the clearance of the UQCRFS1 fragments.

The protein localises to the mitochondrion inner membrane. The enzyme catalyses a quinol + 2 Fe(III)-[cytochrome c](out) = a quinone + 2 Fe(II)-[cytochrome c](out) + 2 H(+)(out). Its function is as follows. Component of the ubiquinol-cytochrome c oxidoreductase, a multisubunit transmembrane complex that is part of the mitochondrial electron transport chain which drives oxidative phosphorylation. The respiratory chain contains 3 multisubunit complexes succinate dehydrogenase (complex II, CII), ubiquinol-cytochrome c oxidoreductase (cytochrome b-c1 complex, complex III, CIII) and cytochrome c oxidase (complex IV, CIV), that cooperate to transfer electrons derived from NADH and succinate to molecular oxygen, creating an electrochemical gradient over the inner membrane that drives transmembrane transport and the ATP synthase. The cytochrome b-c1 complex catalyzes electron transfer from ubiquinol to cytochrome c, linking this redox reaction to translocation of protons across the mitochondrial inner membrane, with protons being carried across the membrane as hydrogens on the quinol. In the process called Q cycle, 2 protons are consumed from the matrix, 4 protons are released into the intermembrane space and 2 electrons are passed to cytochrome c. The Rieske protein is a catalytic core subunit containing a [2Fe-2S] iron-sulfur cluster. It cycles between 2 conformational states during catalysis to transfer electrons from the quinol bound in the Q(0) site in cytochrome b to cytochrome c1. Incorporation of UQCRFS1 is the penultimate step in complex III assembly. Component of the ubiquinol-cytochrome c oxidoreductase (cytochrome b-c1 complex, complex III, CIII). UQCRFS1 undergoes proteolytic processing once it is incorporated in the complex III dimer. One of the fragments, called subunit 9, corresponds to its mitochondrial targeting sequence (MTS). The proteolytic processing is necessary for the correct insertion of UQCRFS1 in the complex III dimer, but the persistence of UQCRFS1-derived fragments may prevent newly imported UQCRFS1 to be processed and assembled into complex III and is detrimental for the complex III structure and function. The sequence is that of Cytochrome b-c1 complex subunit Rieske, mitochondrial (Uqcrfs1) from Rattus norvegicus (Rat).